Consider the following 336-residue polypeptide: HTH-type transcriptional regulator SyrM (336 aa).

One can recognise an HTH lysR-type domain in the interval isoleucine 41–threonine 98. Positions valine 58–glycine 77 form a DNA-binding region, H-T-H motif.

The protein belongs to the LysR transcriptional regulatory family.

Functionally, acts in trans to stimulate nod gene expression via nodD3 and exo gene expression via SyrA. The polypeptide is HTH-type transcriptional regulator SyrM (syrM) (Rhizobium etli).